Here is a 152-residue protein sequence, read N- to C-terminus: SXP/RAL-2 family protein Ani s 5 (152 aa).

A signal peptide spans 1–18 (MKTLIVAALFCTIGMALA). 4 necessary for IgE-binding regions span residues 25-42 (PPFL…FFEL), 49-54 (KTDPEI), 58-66 (LDAWVDTLG), and 103-120 (KKAD…SLNG). IgG4-binding regions lie at residues 49–68 (KTDP…LGGD) and 118–137 (LNGI…LPQS). Positions 127–146 (IQAIYKTLPQSVKDELEKGI) are igE-binding and IgG4-binding.

The protein belongs to the SXP/RAL-2 family. As to quaternary structure, monomer. As to expression, excretory gland, ventriculus, and the luminal epithelium of the intestine of the larvae.

It is found in the secreted. The protein is SXP/RAL-2 family protein Ani s 5 of Anisakis simplex (Herring worm).